The sequence spans 119 residues: UPF0102 protein HI_1656 (119 aa).

Belongs to the UPF0102 family.

This is UPF0102 protein HI_1656 from Haemophilus influenzae (strain ATCC 51907 / DSM 11121 / KW20 / Rd).